The sequence spans 488 residues: Inosine-5'-monophosphate dehydrogenase (488 aa).

CBS domains lie at 95-153 (VISN…SIKI) and 157-216 (MTQE…AKDE). Residues aspartate 250 and 300–302 (GIG) each bind NAD(+). K(+) contacts are provided by glycine 302 and glycine 304. Serine 305 serves as a coordination point for IMP. Cysteine 307 contributes to the K(+) binding site. The active-site Thioimidate intermediate is the cysteine 307. IMP-binding positions include 340–342 (DGG), 363–364 (GS), and 387–391 (YRGMG). Residue arginine 403 is the Proton acceptor of the active site. Glutamate 417 serves as a coordination point for IMP. A disordered region spans residues 468–488 (GLAESHPHNIQITKESPNYSF). Residues glutamate 471, serine 472, and histidine 473 each coordinate K(+). Residues 475–488 (HNIQITKESPNYSF) show a composition bias toward polar residues.

This sequence belongs to the IMPDH/GMPR family. In terms of assembly, homotetramer. K(+) serves as cofactor.

It carries out the reaction IMP + NAD(+) + H2O = XMP + NADH + H(+). It functions in the pathway purine metabolism; XMP biosynthesis via de novo pathway; XMP from IMP: step 1/1. Its activity is regulated as follows. Mycophenolic acid (MPA) is a non-competitive inhibitor that prevents formation of the closed enzyme conformation by binding to the same site as the amobile flap. In contrast, mizoribine monophosphate (MZP) is a competitive inhibitor that induces the closed conformation. MPA is a potent inhibitor of mammalian IMPDHs but a poor inhibitor of the bacterial enzymes. MZP is a more potent inhibitor of bacterial IMPDH. Its function is as follows. Catalyzes the conversion of inosine 5'-phosphate (IMP) to xanthosine 5'-phosphate (XMP), the first committed and rate-limiting step in the de novo synthesis of guanine nucleotides, and therefore plays an important role in the regulation of cell growth. This is Inosine-5'-monophosphate dehydrogenase from Staphylococcus aureus (strain Mu50 / ATCC 700699).